We begin with the raw amino-acid sequence, 541 residues long: uncharacterized protein (541 aa).

Residues 1-55 constitute a signal peptide (tat-type signal); sequence MTKTVTRAGGASGPQQFQSGGETMKYEITRRRFLAASSAVLAAPAIVTMVRPARA. The disordered stretch occupies residues 339–362; sequence RRSPSGISSPRSNRQPKAEALSAR. Residues 341–351 show a composition bias toward low complexity; it reads SPSGISSPRSN. 4 helical membrane passes run 379 to 399, 420 to 440, 466 to 486, and 500 to 520; these read AIVWFARQVVIFSGIALMVFM, LPVLIFPWFILGGIVLAAHSG, LVSAGAFLMLGYQAYLVGEIA, and VGYFALAVGSVLVAIVTLAVA.

This sequence belongs to the bacterial solute-binding protein 7 family. Predicted to be exported by the Tat system. The position of the signal peptide cleavage has not been experimentally proven.

The protein resides in the cell membrane. This is an uncharacterized protein from Sinorhizobium fredii (strain NBRC 101917 / NGR234).